The following is a 628-amino-acid chain: DNA primase (628 aa).

Residues 40–64 (CPFHEERSPSFSVAEDKQIFHCFGC) form a CHC2-type zinc finger. The region spanning 269-351 (NTVLLFEGFM…DLSIVSIPEK (83 aa)) is the Toprim domain. Residues E275, D319, and D321 each coordinate Mg(2+).

Belongs to the DnaG primase family. As to quaternary structure, monomer. Interacts with DnaB. The cofactor is Zn(2+). Mg(2+) is required as a cofactor.

It carries out the reaction ssDNA + n NTP = ssDNA/pppN(pN)n-1 hybrid + (n-1) diphosphate.. In terms of biological role, RNA polymerase that catalyzes the synthesis of short RNA molecules used as primers for DNA polymerase during DNA replication. The chain is DNA primase from Enterococcus faecalis (strain ATCC 700802 / V583).